Here is a 257-residue protein sequence, read N- to C-terminus: UPF0246 protein Rsph17029_0026 (257 aa).

The protein belongs to the UPF0246 family.

The protein is UPF0246 protein Rsph17029_0026 of Cereibacter sphaeroides (strain ATCC 17029 / ATH 2.4.9) (Rhodobacter sphaeroides).